An 81-amino-acid chain; its full sequence is Acylphosphatase (81 aa).

An Acylphosphatase-like domain is found at 1-81 (MYIFHGRVQG…VKYNDFQIRY (81 aa)). Catalysis depends on residues R14 and N32.

Belongs to the acylphosphatase family.

It carries out the reaction an acyl phosphate + H2O = a carboxylate + phosphate + H(+). This is Acylphosphatase (acyP) from Picrophilus torridus (strain ATCC 700027 / DSM 9790 / JCM 10055 / NBRC 100828 / KAW 2/3).